The primary structure comprises 23 residues: Clavanin-B (23 aa).

Position 23 is a phenylalanine amide (Phe-23).

Its subcellular location is the secreted. Its function is as follows. Has antimicrobial activity. This Styela clava (Sea squirt) protein is Clavanin-B.